We begin with the raw amino-acid sequence, 315 residues long: Biotin synthase (315 aa).

The region spanning 39–266 (NSLQFATLLS…KSAIRLTAGR (228 aa)) is the Radical SAM core domain. Cys-54, Cys-58, and Cys-61 together coordinate [4Fe-4S] cluster. Positions 98, 129, 189, and 261 each coordinate [2Fe-2S] cluster.

The protein belongs to the radical SAM superfamily. Biotin synthase family. In terms of assembly, homodimer. Requires [4Fe-4S] cluster as cofactor. It depends on [2Fe-2S] cluster as a cofactor.

It catalyses the reaction (4R,5S)-dethiobiotin + (sulfur carrier)-SH + 2 reduced [2Fe-2S]-[ferredoxin] + 2 S-adenosyl-L-methionine = (sulfur carrier)-H + biotin + 2 5'-deoxyadenosine + 2 L-methionine + 2 oxidized [2Fe-2S]-[ferredoxin]. It functions in the pathway cofactor biosynthesis; biotin biosynthesis; biotin from 7,8-diaminononanoate: step 2/2. Its function is as follows. Catalyzes the conversion of dethiobiotin (DTB) to biotin by the insertion of a sulfur atom into dethiobiotin via a radical-based mechanism. The protein is Biotin synthase of Legionella pneumophila (strain Lens).